The sequence spans 588 residues: MKLEFTEKNYNSFVLQNLNKQRKRKEYWDMALTVDHHVFFAHRNVLAAVSPLVKSLISSNDMKTTDELYITIDPNYLSPATVDQLLDYFYSGKVVISEQNVEELLRGAQYFNTPRLRIHCNDFLIKSIRRVNCLRYLFLAELFELKEVSDLAYSGIRDNFHFWASPEGSMHFMRCPPVIFGRLLRDENLHVLNEDQALSALISWVYFRKEEREKYFKKFFNYINLNAVSNKTLMFASNKLVGLENNSAHATLIESVLMDRKQERPCSLLSYQRKGALLDSVVILGGQKAHGKFNDGVFAYIIQENLWLKLSEMPYRAAALSATAAGRYIYISGGTTEQISGLKTAWRYDMDDNSWTKLPDLPIGLVFHTMVTCGGTVYSVGGSIAPRRYVSNIYRYDERKEAWCLAGKMSIPMDGTAVITKGDRNLYIVTGRCLVKGYISRVGVVDCFDTCTGEVVQCITFPIEFNHRPLLSFHQDNILRVHSHRQSVEINLQKIKANKSTTSVPLLPNSCPLDVSHAICSIGDSKVFVCGGVTTASDVQTKDYTINPNAYLLDQKIGEWQTLACPPEALDCPACCLAKLPCKILQRI.

The BTB domain occupies 28 to 98 (WDMALTVDHH…FYSGKVVISE (71 aa)). In terms of domain architecture, BACK spans 133–235 (CLRYLFLAEL…NAVSNKTLMF (103 aa)). A Phosphoserine modification is found at Ser149. 6 Kelch repeats span residues 280–327 (SVVI…AAGR), 328–375 (YIYI…TCGG), 377–423 (VYSV…TKGD), 425–475 (NLYI…SFHQ), 476–525 (DNIL…IGDS), and 526–580 (KVFV…LAKL).

Interacts with CYLC1; the interaction may be relevant for proper acrosome attachment to the nuclear envelope. As to expression, expressed in testis and in spermatozoa.

Its subcellular location is the cytoplasm. The protein resides in the cytoskeleton. It is found in the perinuclear theca. It localises to the calyx. Its function is as follows. Required for both nuclear and acrosomal shaping during spermiogenesis. This chain is Calicin (Ccin), found in Mus musculus (Mouse).